A 219-amino-acid chain; its full sequence is RNA-3 uncharacterized 24.7 kDa protein (219 aa).

This chain is RNA-3 uncharacterized 24.7 kDa protein, found in Beta macrocarpa (Beet).